The following is a 189-amino-acid chain: Der GTPase-activating protein YihI (189 aa).

The disordered stretch occupies residues 1–81 (MARKKKTRRV…ALAKKDPRLG (81 aa)). 2 stretches are compositionally biased toward basic and acidic residues: residues 9–27 (RVSD…ELPK) and 35–46 (TRYELDAKARED). Residues 60–71 (RHSATENNNNHQ) show a composition bias toward polar residues.

Belongs to the YihI family. In terms of assembly, interacts with Der.

In terms of biological role, a GTPase-activating protein (GAP) that modifies Der/EngA GTPase function. May play a role in ribosome biogenesis. This chain is Der GTPase-activating protein YihI, found in Pasteurella multocida (strain Pm70).